The primary structure comprises 238 residues: uncharacterized protein (238 aa).

The next 5 helical transmembrane spans lie at 6 to 26 (METLIRLFVSILIICVLALMI), 45 to 65 (FILLYFCGFKYLILLLSFFIL), 98 to 118 (IPILFAILAIFGFNWALIGYI), 160 to 180 (IFGTLAGVLGAFLIGLFGYLL), and 186 to 206 (IVLCGTAGGIAGNLADSLVGA).

Belongs to the TMEM19 family.

Its subcellular location is the cell membrane. This is an uncharacterized protein from Methanocaldococcus jannaschii (strain ATCC 43067 / DSM 2661 / JAL-1 / JCM 10045 / NBRC 100440) (Methanococcus jannaschii).